Reading from the N-terminus, the 284-residue chain is Nucleotide-binding protein PP_0949 (284 aa).

8 to 15 (GRSGSGKS) is an ATP binding site. 60–63 (DARN) provides a ligand contact to GTP.

Belongs to the RapZ-like family.

Functionally, displays ATPase and GTPase activities. The chain is Nucleotide-binding protein PP_0949 from Pseudomonas putida (strain ATCC 47054 / DSM 6125 / CFBP 8728 / NCIMB 11950 / KT2440).